Reading from the N-terminus, the 85-residue chain is MLLSVLLQATAAAVGVSKLGAAIGAGLAVIGAGLGIGKIGGSAMEAIARQPEASGDIRMNMIIAAALIEGVALLAVVVCLLVFFL.

2 helical membrane passes run 22-39 (AIGA…IGKI) and 65-85 (AALI…VFFL).

Belongs to the ATPase C chain family. In terms of assembly, F-type ATPases have 2 components, F(1) - the catalytic core - and F(0) - the membrane proton channel. F(1) has five subunits: alpha(3), beta(3), gamma(1), delta(1), epsilon(1). F(0) has three main subunits: a(1), b(2) and c(10-14). The alpha and beta chains form an alternating ring which encloses part of the gamma chain. F(1) is attached to F(0) by a central stalk formed by the gamma and epsilon chains, while a peripheral stalk is formed by the delta and b chains.

Its subcellular location is the cell inner membrane. Its function is as follows. F(1)F(0) ATP synthase produces ATP from ADP in the presence of a proton or sodium gradient. F-type ATPases consist of two structural domains, F(1) containing the extramembraneous catalytic core and F(0) containing the membrane proton channel, linked together by a central stalk and a peripheral stalk. During catalysis, ATP synthesis in the catalytic domain of F(1) is coupled via a rotary mechanism of the central stalk subunits to proton translocation. In terms of biological role, key component of the F(0) channel; it plays a direct role in translocation across the membrane. A homomeric c-ring of between 10-14 subunits forms the central stalk rotor element with the F(1) delta and epsilon subunits. This chain is ATP synthase subunit c, found in Bacteroides thetaiotaomicron (strain ATCC 29148 / DSM 2079 / JCM 5827 / CCUG 10774 / NCTC 10582 / VPI-5482 / E50).